The following is a 196-amino-acid chain: Aliphatic amidase regulator (196 aa).

Residues 129–190 (MAKLKQKTEQ…PILKIAQELL (62 aa)) form the ANTAR domain.

In terms of assembly, forms a complex with AmiC.

Its function is as follows. Positive controlling element of AmiE, the gene for aliphatic amidase. Acts as a transcriptional antitermination factor. It is thought to allow RNA polymerase read through a rho-independent transcription terminator between the AmiE promoter and gene. The sequence is that of Aliphatic amidase regulator (amiR) from Pseudomonas aeruginosa (strain ATCC 15692 / DSM 22644 / CIP 104116 / JCM 14847 / LMG 12228 / 1C / PRS 101 / PAO1).